Reading from the N-terminus, the 431-residue chain is Ribosomal protein uS12 methylthiotransferase RimO (431 aa).

Residues L4–K120 enclose the MTTase N-terminal domain. C13, C49, C83, C150, C154, and C157 together coordinate [4Fe-4S] cluster. In terms of domain architecture, Radical SAM core spans D136–L365. Positions Q368–E431 constitute a TRAM domain.

This sequence belongs to the methylthiotransferase family. RimO subfamily. [4Fe-4S] cluster is required as a cofactor.

The protein resides in the cytoplasm. It carries out the reaction L-aspartate(89)-[ribosomal protein uS12]-hydrogen + (sulfur carrier)-SH + AH2 + 2 S-adenosyl-L-methionine = 3-methylsulfanyl-L-aspartate(89)-[ribosomal protein uS12]-hydrogen + (sulfur carrier)-H + 5'-deoxyadenosine + L-methionine + A + S-adenosyl-L-homocysteine + 2 H(+). Catalyzes the methylthiolation of an aspartic acid residue of ribosomal protein uS12. This is Ribosomal protein uS12 methylthiotransferase RimO from Fervidobacterium nodosum (strain ATCC 35602 / DSM 5306 / Rt17-B1).